An 80-amino-acid chain; its full sequence is Putative membrane protein insertion efficiency factor (80 aa).

It belongs to the UPF0161 family.

The protein resides in the cell inner membrane. Its function is as follows. Could be involved in insertion of integral membrane proteins into the membrane. The protein is Putative membrane protein insertion efficiency factor of Kosmotoga olearia (strain ATCC BAA-1733 / DSM 21960 / TBF 19.5.1).